Here is a 220-residue protein sequence, read N- to C-terminus: MMKCLFLLCLCLLPILVFSSTFTSQNPINLPSESPVPKPVLDTNGKELNPNSSYRIISIGRGALGGDVYLGKSPNSDAPCPDGVFRYNSDVGPSGTPVRFIPLSTNIFEDQLLNIQFNIPTVKLCVSYRNWKVGNLNAHLWTMLLETGGTIGQADSSYFKIVKSSKFGYNLLYCPITRHFLCPFCRDDNFCAKVGVDIQNGKRRLALVSENPLDVLFQEV.

Positions Met-1–Thr-23 are cleaved as a signal peptide. The propeptide occupies Ser-24–Ser-32. The Vacuolar targeting signal motif lies at Asn-26–Pro-31. N-linked (GlcNAc...) asparagine glycosylation occurs at Asn-51. Cystine bridges form between Cys-80–Cys-125 and Cys-174–Cys-185.

This sequence belongs to the protease inhibitor I3 (leguminous Kunitz-type inhibitor) family. In terms of tissue distribution, tubers.

The protein localises to the vacuole. In terms of biological role, inhibits tightly cathepsin D (aspartic protease) and weakly trypsin (serine protease). May protect the plant by inhibiting proteases of invading organisms. This Solanum tuberosum (Potato) protein is Aspartic protease inhibitor 4.